Here is a 157-residue protein sequence, read N- to C-terminus: Crossover junction endodeoxyribonuclease RuvC (157 aa).

Residues aspartate 7, glutamate 66, and aspartate 139 contribute to the active site. Mg(2+) is bound by residues aspartate 7, glutamate 66, and aspartate 139.

It belongs to the RuvC family. Homodimer which binds Holliday junction (HJ) DNA. The HJ becomes 2-fold symmetrical on binding to RuvC with unstacked arms; it has a different conformation from HJ DNA in complex with RuvA. In the full resolvosome a probable DNA-RuvA(4)-RuvB(12)-RuvC(2) complex forms which resolves the HJ. Mg(2+) is required as a cofactor.

It localises to the cytoplasm. It catalyses the reaction Endonucleolytic cleavage at a junction such as a reciprocal single-stranded crossover between two homologous DNA duplexes (Holliday junction).. Its function is as follows. The RuvA-RuvB-RuvC complex processes Holliday junction (HJ) DNA during genetic recombination and DNA repair. Endonuclease that resolves HJ intermediates. Cleaves cruciform DNA by making single-stranded nicks across the HJ at symmetrical positions within the homologous arms, yielding a 5'-phosphate and a 3'-hydroxyl group; requires a central core of homology in the junction. The consensus cleavage sequence is 5'-(A/T)TT(C/G)-3'. Cleavage occurs on the 3'-side of the TT dinucleotide at the point of strand exchange. HJ branch migration catalyzed by RuvA-RuvB allows RuvC to scan DNA until it finds its consensus sequence, where it cleaves and resolves the cruciform DNA. In terms of biological role, required for efficient infection in a mouse model system. This Helicobacter pylori (strain G27) protein is Crossover junction endodeoxyribonuclease RuvC.